Reading from the N-terminus, the 2230-residue chain is Probable serine/threonine-protein kinase DDB_G0267686 (2230 aa).

Over residues 1 to 12 (MEPNNNISNSNN) the composition is skewed to low complexity. Disordered stretches follow at residues 1-22 (MEPNNNISNSNNGGSGIDGDGK), 121-152 (NNNSNNNNNDNNNNNNNNNNNNNNNNNIQLNN), 270-352 (DEKE…DKIS), 368-397 (PIINATDSSSNSINSSSNNSIATTPGRLSS), 430-451 (NGASGSNSGNVSPSGPTPILST), 464-574 (KNSS…NSPS), 593-620 (GSGSSSLGKGSSKKIKDSYSNNNNNSST), 699-849 (QHQQ…LLPS), and 915-974 (SNQI…SSNS). Residues 270–336 (DEKENKEGGQ…NENEKNHNDK (67 aa)) show a composition bias toward basic and acidic residues. Positions 337-346 (NDDDDDDEDN) are enriched in acidic residues. Composition is skewed to low complexity over residues 375–388 (SSSNSINSSSNNSI), 430–447 (NGASGSNSGNVSPSGPTP), 473–574 (NNNN…NSPS), 593–602 (GSGSSSLGKG), 610–619 (SYSNNNNNSS), and 699–721 (QHQQHQQAHQHQHQQQQQHQQQL). Polar residues predominate over residues 722-731 (KSRSNTTNTP). The span at 745–754 (NSPPVSPPSS) shows a compositional bias: pro residues. Low complexity-rich tracts occupy residues 755 to 766 (PMLSPLSSSPPS) and 783 to 818 (TGSLLSGSSSNNNTTTTTTTTTSNSNSLSNNNRSNS). Positions 840 to 849 (YNTTPPLLPS) are enriched in polar residues. Positions 991–1119 (SLSALMKDRI…CILHSTTNGT (129 aa)) constitute an RGS domain. 8 disordered regions span residues 1146–1181 (SKETSNSLVNNNTTPNTSTASPSITASSSSTSINNN), 1220–1243 (KLSHSNSPSPSSSPPDSYTSNQPL), 1300–1362 (LSPP…GDQT), 1506–1546 (QQQQ…QPQQ), 1563–1611 (PTIP…NNNS), 1725–1771 (VSNN…NNGN), 1802–1848 (NNLM…NNNH), and 1905–1929 (ENNTTTTTTTTSNRPFRSNNPTISQ). Composition is skewed to low complexity over residues 1149 to 1181 (TSNSLVNNNTTPNTSTASPSITASSSSTSINNN) and 1222 to 1239 (SHSNSPSPSSSPPDSYTS). Polar residues predominate over residues 1324–1353 (TNGSMKSSLFQQQLQPTGSINSSPINNHQV). 2 stretches are compositionally biased toward low complexity: residues 1506–1520 (QQQQQQHQQHQQFQP) and 1530–1546 (PSSNSIIQPSQQQQPQQ). Positions 1726 to 1769 (SNNNNINSNNNNNNNNNNNNNNNNNNNNNNNNNNNNNNNSNNNN) are enriched in low complexity. The segment covering 1905–1915 (ENNTTTTTTTT) has biased composition (low complexity). The span at 1916-1929 (SNRPFRSNNPTISQ) shows a compositional bias: polar residues. The region spanning 1949-2208 (IVFLNKLGEG…SCPEILDSLL (260 aa)) is the Protein kinase domain. ATP-binding positions include 1955–1963 (LGEGTSAKV) and K1976. Residue D2069 is the Proton acceptor of the active site.

Belongs to the protein kinase superfamily. TKL Ser/Thr protein kinase family.

It catalyses the reaction L-seryl-[protein] + ATP = O-phospho-L-seryl-[protein] + ADP + H(+). The catalysed reaction is L-threonyl-[protein] + ATP = O-phospho-L-threonyl-[protein] + ADP + H(+). This Dictyostelium discoideum (Social amoeba) protein is Probable serine/threonine-protein kinase DDB_G0267686.